The chain runs to 466 residues: Cysteine--tRNA ligase (466 aa).

C29 contacts Zn(2+). Positions 31–41 (ATVQAPPHIGH) match the 'HIGH' region motif. Positions 211, 236, and 240 each coordinate Zn(2+). Residues 267–271 (KMSKS) carry the 'KMSKS' region motif. K270 lines the ATP pocket.

It belongs to the class-I aminoacyl-tRNA synthetase family. As to quaternary structure, monomer. It depends on Zn(2+) as a cofactor.

It localises to the cytoplasm. It carries out the reaction tRNA(Cys) + L-cysteine + ATP = L-cysteinyl-tRNA(Cys) + AMP + diphosphate. The sequence is that of Cysteine--tRNA ligase from Thermobifida fusca (strain YX).